Consider the following 341-residue polypeptide: Anthranilate phosphoribosyltransferase (341 aa).

5-phospho-alpha-D-ribose 1-diphosphate contacts are provided by residues Gly79, Gly82–Asp83, Thr87, Asn89–Thr92, Lys107–Ser115, and Ser119. Gly79 is a binding site for anthranilate. Residue Ser91 coordinates Mg(2+). Asn110 is an anthranilate binding site. Position 165 (Arg165) interacts with anthranilate. Mg(2+) is bound by residues Asp224 and Glu225.

Belongs to the anthranilate phosphoribosyltransferase family. In terms of assembly, homodimer. Mg(2+) is required as a cofactor.

It catalyses the reaction N-(5-phospho-beta-D-ribosyl)anthranilate + diphosphate = 5-phospho-alpha-D-ribose 1-diphosphate + anthranilate. Its pathway is amino-acid biosynthesis; L-tryptophan biosynthesis; L-tryptophan from chorismate: step 2/5. Its function is as follows. Catalyzes the transfer of the phosphoribosyl group of 5-phosphorylribose-1-pyrophosphate (PRPP) to anthranilate to yield N-(5'-phosphoribosyl)-anthranilate (PRA). This chain is Anthranilate phosphoribosyltransferase, found in Dehalococcoides mccartyi (strain ATCC BAA-2266 / KCTC 15142 / 195) (Dehalococcoides ethenogenes (strain 195)).